The sequence spans 431 residues: Glutamyl-tRNA reductase (431 aa).

Residues 49-52, Ser-109, 114-116, and Gln-120 contribute to the substrate site; these read TCNR and EGQ. Cys-50 serves as the catalytic Nucleophile. Residue 189–194 participates in NADP(+) binding; it reads GAGKMA.

The protein belongs to the glutamyl-tRNA reductase family. As to quaternary structure, homodimer.

It catalyses the reaction (S)-4-amino-5-oxopentanoate + tRNA(Glu) + NADP(+) = L-glutamyl-tRNA(Glu) + NADPH + H(+). Its pathway is porphyrin-containing compound metabolism; protoporphyrin-IX biosynthesis; 5-aminolevulinate from L-glutamyl-tRNA(Glu): step 1/2. The protein operates within porphyrin-containing compound metabolism; chlorophyll biosynthesis. In terms of biological role, catalyzes the NADPH-dependent reduction of glutamyl-tRNA(Glu) to glutamate 1-semialdehyde (GSA). The chain is Glutamyl-tRNA reductase from Synechococcus sp. (strain JA-3-3Ab) (Cyanobacteria bacterium Yellowstone A-Prime).